Reading from the N-terminus, the 43-residue chain is Protein PsbN (43 aa).

The helical transmembrane segment at 5–27 (TLVAIPISCLLVSFTGYALYTAF) threads the bilayer.

This sequence belongs to the PsbN family.

The protein localises to the plastid. It localises to the chloroplast thylakoid membrane. Functionally, may play a role in photosystem I and II biogenesis. The sequence is that of Protein PsbN from Sphagnum cuspidatum (Bog moss).